We begin with the raw amino-acid sequence, 271 residues long: Phosphate import ATP-binding protein PstB (271 aa).

The 242-residue stretch at 25–266 folds into the ABC transporter domain; sequence FDTKNLNLWY…PSDKRTEDYI (242 aa). 57-64 contacts ATP; sequence GPSGCGKS.

It belongs to the ABC transporter superfamily. Phosphate importer (TC 3.A.1.7) family. In terms of assembly, the complex is composed of two ATP-binding proteins (PstB), two transmembrane proteins (PstC and PstA) and a solute-binding protein (PstS).

The protein resides in the cell membrane. The enzyme catalyses phosphate(out) + ATP + H2O = ADP + 2 phosphate(in) + H(+). Its function is as follows. Part of the ABC transporter complex PstSACB involved in phosphate import. Responsible for energy coupling to the transport system. This chain is Phosphate import ATP-binding protein PstB, found in Bacillus cereus (strain ATCC 14579 / DSM 31 / CCUG 7414 / JCM 2152 / NBRC 15305 / NCIMB 9373 / NCTC 2599 / NRRL B-3711).